Reading from the N-terminus, the 224-residue chain is Beta-casein (224 aa).

Residues 1-15 (MKVLILACLVALALA) form the signal peptide. Phosphoserine is present on residues Ser30, Ser32, Ser33, and Ser34. At Ser50 the chain carries Phosphoserine; in variant A1, variant A2, variant A3, variant B, variant E, variant F, variant G and variant H.

This sequence belongs to the beta-casein family. As to expression, mammary gland specific. Secreted in milk.

The protein localises to the secreted. Its function is as follows. Important role in determination of the surface properties of the casein micelles. Casoparan acts as a macrophage activator, increasing the phagocytic activity of macrophages and peroxide release from macrophages. It also acts as a bradykinin-potentiating peptide. Functionally, casohypotensin acts as a bradykinin-potentiating peptide. Induces hypotension in rats. Acts as a strong competitive inhibitor of endo-oligopeptidase A. In terms of biological role, antioxidant peptide has antioxidant activity. The chain is Beta-casein (CSN2) from Bos taurus (Bovine).